Consider the following 43-residue polypeptide: Photosystem I reaction center subunit IX (43 aa).

A helical transmembrane segment spans residues 7–27 (YLSVAPVLSTLWFGSLAGLLI).

The protein belongs to the PsaJ family.

It is found in the plastid. Its subcellular location is the chloroplast thylakoid membrane. Its function is as follows. May help in the organization of the PsaE and PsaF subunits. This chain is Photosystem I reaction center subunit IX, found in Aethionema cordifolium (Lebanon stonecress).